The chain runs to 217 residues: Phosphoribosylformylglycinamidine synthase subunit PurQ (217 aa).

The Glutamine amidotransferase type-1 domain maps to Asn-2 to Ser-217. Cys-86 serves as the catalytic Nucleophile. Catalysis depends on residues His-194 and Glu-196.

In terms of assembly, part of the FGAM synthase complex composed of 1 PurL, 1 PurQ and 2 PurS subunits.

Its subcellular location is the cytoplasm. The catalysed reaction is N(2)-formyl-N(1)-(5-phospho-beta-D-ribosyl)glycinamide + L-glutamine + ATP + H2O = 2-formamido-N(1)-(5-O-phospho-beta-D-ribosyl)acetamidine + L-glutamate + ADP + phosphate + H(+). It catalyses the reaction L-glutamine + H2O = L-glutamate + NH4(+). It functions in the pathway purine metabolism; IMP biosynthesis via de novo pathway; 5-amino-1-(5-phospho-D-ribosyl)imidazole from N(2)-formyl-N(1)-(5-phospho-D-ribosyl)glycinamide: step 1/2. Its function is as follows. Part of the phosphoribosylformylglycinamidine synthase complex involved in the purines biosynthetic pathway. Catalyzes the ATP-dependent conversion of formylglycinamide ribonucleotide (FGAR) and glutamine to yield formylglycinamidine ribonucleotide (FGAM) and glutamate. The FGAM synthase complex is composed of three subunits. PurQ produces an ammonia molecule by converting glutamine to glutamate. PurL transfers the ammonia molecule to FGAR to form FGAM in an ATP-dependent manner. PurS interacts with PurQ and PurL and is thought to assist in the transfer of the ammonia molecule from PurQ to PurL. The sequence is that of Phosphoribosylformylglycinamidine synthase subunit PurQ from Prochlorococcus marinus (strain NATL2A).